Reading from the N-terminus, the 382-residue chain is Type 2 DNA topoisomerase 6 subunit A (382 aa).

One can recognise a Topo IIA-type catalytic domain in the interval 14–155; the sequence is YDPQKVLKKL…MHITADRRGY (142 aa). Tyr108 serves as the catalytic O-(5'-phospho-DNA)-tyrosine intermediate. The Mg(2+) site is built by Glu202 and Asp254.

This sequence belongs to the TOP6A family. As to quaternary structure, homodimer. Heterotetramer of two Top6A and two Top6B chains. The cofactor is Mg(2+).

The catalysed reaction is ATP-dependent breakage, passage and rejoining of double-stranded DNA.. Relaxes both positive and negative superturns and exhibits a strong decatenase activity. The sequence is that of Type 2 DNA topoisomerase 6 subunit A from Pyrococcus abyssi (strain GE5 / Orsay).